The following is a 1208-amino-acid chain: Lysine-specific demethylase JMJ17 (1208 aa).

The PHD-type 1; degenerate zinc-finger motif lies at methionine 1 to threonine 36. The Zn(2+) site is built by cysteine 4, cysteine 7, cysteine 30, and cysteine 33. Residues glutamate 126–arginine 292 form the JmjC domain. Positions 172, 174, and 260 each coordinate Fe cation. Zn(2+) contacts are provided by cysteine 369, cysteine 372, cysteine 383, cysteine 385, cysteine 392, histidine 395, cysteine 400, and cysteine 402. The C5HC2 zinc finger occupies cysteine 369–methionine 421. Residues serine 613 to lysine 620 carry the Nuclear localization signal motif. Residues methionine 1099–leucine 1145 form a PHD-type 2 zinc finger. Zn(2+) is bound by residues cysteine 1102, cysteine 1104, cysteine 1116, cysteine 1119, histidine 1124, cysteine 1127, cysteine 1139, and cysteine 1142.

Belongs to the JARID1 histone demethylase family. Fe(2+) is required as a cofactor. In terms of tissue distribution, expressed in inflorescences, roots, seedlings and siliques, and, at low levels, in leaves and stems.

The protein localises to the nucleus. It catalyses the reaction N(6),N(6),N(6)-trimethyl-L-lysyl(4)-[histone H3] + 2-oxoglutarate + O2 = N(6),N(6)-dimethyl-L-lysyl(4)-[histone H3] + formaldehyde + succinate + CO2. The catalysed reaction is N(6),N(6)-dimethyl-L-lysyl(4)-[histone H3] + 2-oxoglutarate + O2 = N(6)-methyl-L-lysyl(4)-[histone H3] + formaldehyde + succinate + CO2. It carries out the reaction N(6)-methyl-L-lysyl(4)-[histone H3] + 2-oxoglutarate + O2 = L-lysyl(4)-[histone H3] + formaldehyde + succinate + CO2. The enzyme catalyses N(6),N(6),N(6)-trimethyl-L-lysyl(4)-[histone H3] + 3 2-oxoglutarate + 3 O2 = L-lysyl(4)-[histone H3] + 3 formaldehyde + 3 succinate + 3 CO2. Functionally, functions as a histone H3 'Lys-4' (H3K4me) demethylase involved in the regulation of gene expression. Active on H3K4me1, H3K4me2 and H3K4me3. Repressor of the abscisic acid (ABA) signaling pathway, especially during stomatal closure regulation. Negative regulator of responses to dehydration stress by binding directly to the chromatin of SRK2E/OST1 and demethylating H3K4me3 to regulates its expression. Together with JMJ14 and JMJ16, required for plant growth and development. The protein is Lysine-specific demethylase JMJ17 of Arabidopsis thaliana (Mouse-ear cress).